The primary structure comprises 386 residues: Succinate--CoA ligase [ADP-forming] subunit beta (386 aa).

Positions 9–244 (KDILRQFGVP…LDEEDPAEVE (236 aa)) constitute an ATP-grasp domain. ATP-binding positions include lysine 46, 53-55 (GRG), glutamate 99, alanine 102, and glutamate 107. Mg(2+) is bound by residues asparagine 199 and aspartate 213. Substrate contacts are provided by residues asparagine 264 and 321–323 (GIM).

This sequence belongs to the succinate/malate CoA ligase beta subunit family. In terms of assembly, heterotetramer of two alpha and two beta subunits. It depends on Mg(2+) as a cofactor.

The enzyme catalyses succinate + ATP + CoA = succinyl-CoA + ADP + phosphate. It catalyses the reaction GTP + succinate + CoA = succinyl-CoA + GDP + phosphate. It functions in the pathway carbohydrate metabolism; tricarboxylic acid cycle; succinate from succinyl-CoA (ligase route): step 1/1. Functionally, succinyl-CoA synthetase functions in the citric acid cycle (TCA), coupling the hydrolysis of succinyl-CoA to the synthesis of either ATP or GTP and thus represents the only step of substrate-level phosphorylation in the TCA. The beta subunit provides nucleotide specificity of the enzyme and binds the substrate succinate, while the binding sites for coenzyme A and phosphate are found in the alpha subunit. This is Succinate--CoA ligase [ADP-forming] subunit beta from Delftia acidovorans (strain DSM 14801 / SPH-1).